Here is a 311-residue protein sequence, read N- to C-terminus: Malate dehydrogenase (311 aa).

Residues 7–13 (GAAGGIG) and Asp-34 contribute to the NAD(+) site. Arg-81 and Arg-87 together coordinate substrate. Residues Asn-94 and 117–119 (ITN) contribute to the NAD(+) site. Asn-119 and Arg-153 together coordinate substrate. His-177 (proton acceptor) is an active-site residue. Met-227 contributes to the NAD(+) binding site.

This sequence belongs to the LDH/MDH superfamily. MDH type 1 family. Homodimer.

It catalyses the reaction (S)-malate + NAD(+) = oxaloacetate + NADH + H(+). In terms of biological role, catalyzes the reversible oxidation of malate to oxaloacetate. The polypeptide is Malate dehydrogenase (Shewanella denitrificans (strain OS217 / ATCC BAA-1090 / DSM 15013)).